A 100-amino-acid polypeptide reads, in one-letter code: Urease subunit gamma (100 aa).

Belongs to the urease gamma subunit family. In terms of assembly, heterotrimer of UreA (gamma), UreB (beta) and UreC (alpha) subunits. Three heterotrimers associate to form the active enzyme.

It is found in the cytoplasm. It catalyses the reaction urea + 2 H2O + H(+) = hydrogencarbonate + 2 NH4(+). It participates in nitrogen metabolism; urea degradation; CO(2) and NH(3) from urea (urease route): step 1/1. In Methylobacillus flagellatus (strain ATCC 51484 / DSM 6875 / VKM B-1610 / KT), this protein is Urease subunit gamma.